The sequence spans 124 residues: Large ribosomal subunit protein bL21 (124 aa).

Residues 105–124 (NAPSIGPRVRKAKPAAEAAE) form a disordered region.

It belongs to the bacterial ribosomal protein bL21 family. In terms of assembly, part of the 50S ribosomal subunit. Contacts protein L20.

This protein binds to 23S rRNA in the presence of protein L20. The chain is Large ribosomal subunit protein bL21 from Rhodopseudomonas palustris (strain BisA53).